A 190-amino-acid polypeptide reads, in one-letter code: GTP cyclohydrolase 1 (190 aa).

Zn(2+) is bound by residues cysteine 75, histidine 78, and cysteine 146.

Belongs to the GTP cyclohydrolase I family. Toroid-shaped homodecamer, composed of two pentamers of five dimers.

The enzyme catalyses GTP + H2O = 7,8-dihydroneopterin 3'-triphosphate + formate + H(+). The protein operates within cofactor biosynthesis; 7,8-dihydroneopterin triphosphate biosynthesis; 7,8-dihydroneopterin triphosphate from GTP: step 1/1. The chain is GTP cyclohydrolase 1 from Campylobacter jejuni subsp. jejuni serotype O:23/36 (strain 81-176).